Consider the following 439-residue polypeptide: Tol-Pal system protein TolB (439 aa).

The signal sequence occupies residues 1-22 (MKKPLRWLAALTALLLPLSALA).

The protein belongs to the TolB family. As to quaternary structure, the Tol-Pal system is composed of five core proteins: the inner membrane proteins TolA, TolQ and TolR, the periplasmic protein TolB and the outer membrane protein Pal. They form a network linking the inner and outer membranes and the peptidoglycan layer.

Its subcellular location is the periplasm. Its function is as follows. Part of the Tol-Pal system, which plays a role in outer membrane invagination during cell division and is important for maintaining outer membrane integrity. This chain is Tol-Pal system protein TolB, found in Xanthomonas axonopodis pv. citri (strain 306).